Reading from the N-terminus, the 271-residue chain is Gap junction beta-5 protein (271 aa).

The Cytoplasmic portion of the chain corresponds to 1–20 (MNWSVFEGLLSGVNKYSTAF). The helical transmembrane segment at 21–40 (GRIWLSLVFVFRVLVYLVTA) threads the bilayer. The Extracellular portion of the chain corresponds to 41 to 75 (ERVWGDDQKDFDCNTRQPGCTNVCYDEFFPVSHVR). The helical transmembrane segment at 76–98 (LWALQLILVTCPSLLVVMHVAYR) threads the bilayer. Topologically, residues 99-124 (KAREKKYQQEVGKGYLYPNPGKKRGG) are cytoplasmic. The chain crosses the membrane as a helical span at residues 125 to 147 (LWWTYVCSLLFKATIDIIFLYLF). Over 148–182 (HAFYPRYTLPSMVKCHSAPCPNTVDCFIAKPSEKN) the chain is Extracellular. Residues 183-205 (IFIVFMLVTAIVCILLNLVELLY) form a helical membrane-spanning segment. The Cytoplasmic segment spans residues 206–271 (LVIKRCSECA…PRAHVKKTIL (66 aa)). The tract at residues 217–237 (AKRPPTAHAKNDPNWANPSSK) is disordered.

Belongs to the connexin family. Beta-type (group I) subfamily. As to quaternary structure, a connexon is composed of a hexamer of connexins. As to expression, expressed in skin.

The protein resides in the cell membrane. The protein localises to the cell junction. Its subcellular location is the gap junction. One gap junction consists of a cluster of closely packed pairs of transmembrane channels, the connexons, through which materials of low MW diffuse from one cell to a neighboring cell. In Rattus norvegicus (Rat), this protein is Gap junction beta-5 protein (Gjb5).